Here is a 179-residue protein sequence, read N- to C-terminus: Ribosome maturation factor RimM (179 aa).

The region spanning 96-175 (KDEYFWFDIE…IITVIGAMDI (80 aa)) is the PRC barrel domain.

The protein belongs to the RimM family. In terms of assembly, binds ribosomal protein uS19.

The protein resides in the cytoplasm. Its function is as follows. An accessory protein needed during the final step in the assembly of 30S ribosomal subunit, possibly for assembly of the head region. Essential for efficient processing of 16S rRNA. May be needed both before and after RbfA during the maturation of 16S rRNA. It has affinity for free ribosomal 30S subunits but not for 70S ribosomes. The protein is Ribosome maturation factor RimM of Sulfurimonas denitrificans (strain ATCC 33889 / DSM 1251) (Thiomicrospira denitrificans (strain ATCC 33889 / DSM 1251)).